Consider the following 132-residue polypeptide: ER membrane protein complex subunit 5 (132 aa).

Topologically, residues 1–3 are cytoplasmic; it reads MAS. A helical transmembrane segment spans residues 4 to 22; it reads SIWKGLVGIGLFALAHAAF. Residues 23–43 are Lumenal-facing; the sequence is SAAQHRSYMRLTEKEDETLPI. Residues 44–63 form a helical membrane-spanning segment; it reads DIVLQTLLAFIVACYGIVHI. The Cytoplasmic portion of the chain corresponds to 64 to 132; it reads AGEFKDMDAT…KLSKLESMHR (69 aa).

This sequence belongs to the membrane magnesium transporter (TC 1.A.67) family. Component of the ER membrane protein complex (EMC).

The protein localises to the endoplasmic reticulum membrane. It localises to the golgi apparatus membrane. It is found in the early endosome membrane. Part of the endoplasmic reticulum membrane protein complex (EMC) that enables the energy-independent insertion into endoplasmic reticulum membranes of newly synthesized membrane proteins. Preferentially accommodates proteins with transmembrane domains that are weakly hydrophobic or contain destabilizing features such as charged and aromatic residues. Involved in the cotranslational insertion of multi-pass membrane proteins in which stop-transfer membrane-anchor sequences become ER membrane spanning helices. It is also required for the post-translational insertion of tail-anchored/TA proteins in endoplasmic reticulum membranes. By mediating the proper cotranslational insertion of N-terminal transmembrane domains in an N-exo topology, with translocated N-terminus in the lumen of the ER, controls the topology of multi-pass membrane proteins like the G protein-coupled receptors. By regulating the insertion of various proteins in membranes, it is indirectly involved in many cellular processes. May be involved in Mg(2+) transport. The polypeptide is ER membrane protein complex subunit 5 (Xenopus tropicalis (Western clawed frog)).